The following is a 252-amino-acid chain: MKILVSNDDGVLAPGIKILANELSTLGEVKVVAPDRNRSGASNSLTLTQPLRVKQLDNGYYSVDGTPTDCVHLALTGFLEPIADIVVSGINEGANLGDDVLYSGTVAAAMEGRYLGLPAIAISMVGDNIQYYETAAIIAKQLVIKLSANKLPSQTILNVNVPDLPLSQIRGLQVTRLGTRHSAEPIIKEYDPRGRPIYWVGPPGIEADAGAGTDFFAIKTGHVSITPLHLDMTHYKLFDHLSNLLNEICIEN.

Residues Asp8, Asp9, Ser39, and Asn91 each contribute to the a divalent metal cation site.

Belongs to the SurE nucleotidase family. The cofactor is a divalent metal cation.

Its subcellular location is the cytoplasm. The catalysed reaction is a ribonucleoside 5'-phosphate + H2O = a ribonucleoside + phosphate. Its function is as follows. Nucleotidase that shows phosphatase activity on nucleoside 5'-monophosphates. This chain is 5'-nucleotidase SurE, found in Legionella pneumophila (strain Paris).